Reading from the N-terminus, the 162-residue chain is SCF ubiquitin ligase complex protein SKP1a (162 aa).

Position 2 is an N-acetylserine (serine 2). Residues 100–162 (ILAANYLDIK…NEWCEDKGGN (63 aa)) are interaction with the F-box domain of F-box proteins. Proline 143 is modified (4-hydroxyproline). Proline 143 carries O-linked (GlcNAc...) hydroxyproline glycosylation.

The protein belongs to the SKP1 family. As to quaternary structure, multiprotein complex (SCF) with cullin and F-box-containing protein. Capable of undergoing aggregation. Post-translationally, O-linked glycan consists of linear Gal-Gal-Fuc-Gal-GlcNAc. FpaA and fpaB seem to be identically glycosylated. Glycosylation is required for nuclear enrichment. In terms of processing, hydroxylated by phyA.

Its subcellular location is the cytoplasm. The protein resides in the nucleus. This is SCF ubiquitin ligase complex protein SKP1a (fpaA) from Dictyostelium discoideum (Social amoeba).